The following is an 810-amino-acid chain: Coiled-coil domain-containing protein 15 (810 aa).

Coiled coils occupy residues 65–89, 160–189, and 638–669; these read VVEE…RQVR, DGEN…SFKT, and MDIE…EQQR.

Interacts with POC5, POC1B, CETN2 and FAM161A.

It is found in the cytoplasm. The protein resides in the cytoskeleton. It localises to the microtubule organizing center. The protein localises to the centrosome. Its subcellular location is the centriole. It is found in the centriolar satellite. Plays an important role in primary cilium assembly, maintenance, and length regulation. Interacts with centriole inner scaffold proteins to promote proper centriole size and integrity and assembly of functional cilia. Required for the recruitment of both the inner scaffold protein POC1B and the distal SFI1/CETN2 complex to centrioles. The protein is Coiled-coil domain-containing protein 15 (Ccdc15) of Mus musculus (Mouse).